Here is a 101-residue protein sequence, read N- to C-terminus: MFVKKGDKVRVIAGKDKGVEAVVVTALPKVNKVIVEGVNIVKKHQKSNSENPQGAIVEKEAPIHVSNVQVLDKNGVAGRVGYKFVDGKKVRYNKKSGEVLD.

Belongs to the universal ribosomal protein uL24 family. Part of the 50S ribosomal subunit.

In terms of biological role, one of two assembly initiator proteins, it binds directly to the 5'-end of the 23S rRNA, where it nucleates assembly of the 50S subunit. Functionally, one of the proteins that surrounds the polypeptide exit tunnel on the outside of the subunit. This is Large ribosomal subunit protein uL24 from Streptococcus suis (strain 98HAH33).